Consider the following 536-residue polypeptide: Suppressor of cytokine signaling 5 (536 aa).

A required for interaction with IL4R region spans residues 1-50 (MDKVGKMWNNFKYRCQNLFGHEGGSRSENVDMNSNRCLSVKEKNISIGDS). The tract at residues 115–175 (SRHAPWGGKK…SVSSRTVGSR (61 aa)) is disordered. Residues 158-169 (VSSVHDMDSVSS) show a composition bias toward low complexity. In terms of domain architecture, SH2 spans 381 to 476 (CYWGVMDRYE…FFEPLLTISL (96 aa)). In terms of domain architecture, SOCS box spans 471 to 520 (LLTISLNRTFPFSLQYICRAVICRCTTYDGIDGLPLPSMLQDFLKEYHYK).

In terms of assembly, interacts with IL4R; inhibits IL4 signaling. Interacts with EGFR. Interacts with ELOB and ELOC; mediates EGFR ubiquitination and degradation. Post-translationally, phosphorylated. Phosphorylation is induced by EGF.

The protein operates within protein modification; protein ubiquitination. In terms of biological role, SOCS family proteins form part of a classical negative feedback system that regulates cytokine signal transduction. May be a substrate-recognition component of a SCF-like ECS (Elongin BC-CUL2/5-SOCS-box protein) E3 ubiquitin-protein ligase complex which mediates the ubiquitination and subsequent proteasomal degradation of target proteins. Inhibits for instance EGF signaling by mediating the degradation of the EGF receptor/EGFR. Involved in the regulation of T-helper cell differentiation by inhibiting of the IL4 signaling pathway which promotes differentiation into the Th2 phenotype. Can also partially inhibit IL6 and LIF signaling. This is Suppressor of cytokine signaling 5 (SOCS5) from Homo sapiens (Human).